The sequence spans 233 residues: Pirin-like protein YhaK (233 aa).

This sequence belongs to the pirin family. In terms of assembly, monomer.

The protein resides in the cytoplasm. Its function is as follows. Does not have quercetin 2,3-dioxygenase activity. In Escherichia coli (strain K12), this protein is Pirin-like protein YhaK (yhaK).